Reading from the N-terminus, the 480-residue chain is Ribulose bisphosphate carboxylase large chain (480 aa).

The propeptide occupies 1 to 2 (MS). P3 bears the N-acetylproline mark. An N6,N6,N6-trimethyllysine modification is found at K14. Substrate contacts are provided by N123 and T173. The active-site Proton acceptor is K175. K177 is a binding site for substrate. K201, D203, and E204 together coordinate Mg(2+). Residue K201 is modified to N6-carboxylysine. The active-site Proton acceptor is H294. 3 residues coordinate substrate: R295, H327, and S379.

Belongs to the RuBisCO large chain family. Type I subfamily. As to quaternary structure, heterohexadecamer of 8 large chains and 8 small chains; disulfide-linked. The disulfide link is formed within the large subunit homodimers. Mg(2+) is required as a cofactor. The disulfide bond which can form in the large chain dimeric partners within the hexadecamer appears to be associated with oxidative stress and protein turnover.

It is found in the plastid. Its subcellular location is the chloroplast. The enzyme catalyses 2 (2R)-3-phosphoglycerate + 2 H(+) = D-ribulose 1,5-bisphosphate + CO2 + H2O. It catalyses the reaction D-ribulose 1,5-bisphosphate + O2 = 2-phosphoglycolate + (2R)-3-phosphoglycerate + 2 H(+). Its function is as follows. RuBisCO catalyzes two reactions: the carboxylation of D-ribulose 1,5-bisphosphate, the primary event in carbon dioxide fixation, as well as the oxidative fragmentation of the pentose substrate in the photorespiration process. Both reactions occur simultaneously and in competition at the same active site. In Acorus calamus var. americanus (American sweet flag), this protein is Ribulose bisphosphate carboxylase large chain.